Here is a 491-residue protein sequence, read N- to C-terminus: Keratin, type II microfibrillar, component 7C (491 aa).

Cysteine 1 carries the blocked amino end (Cys) modification. A head region spans residues 1–109; sequence CGFSTVGSGF…PNAQCVKQEE (109 aa). The IF rod domain maps to 109–420; it reads EKEQIKCLNN…RLLEGEEQRL (312 aa). The tract at residues 110-144 is coil 1A; sequence KEQIKCLNNRFAAFIDKVRFLEQQNKLLETKLQFF. Residues 145 to 154 form a linker 1 region; sequence QNRQCCESNL. The coil 1B stretch occupies residues 155–255; it reads EPLFEGYIET…YQEEIRVLQA (101 aa). A linker 12 region spans residues 256 to 272; that stretch reads NISDTSVIVKMDNSRDL. Residues 273 to 416 are coil 2; that stretch reads NMDCIVAEIK…ATYRRLLEGE (144 aa). The tail stretch occupies residues 417–491; the sequence is EQRLCEGVGA…GGGSCSLGRC (75 aa).

This sequence belongs to the intermediate filament family.

In terms of biological role, wool microfibrillar keratin. This is Keratin, type II microfibrillar, component 7C from Ovis aries (Sheep).